The following is a 498-amino-acid chain: Glycerol kinase (498 aa).

Residue Thr12 coordinates ADP. 3 residues coordinate ATP: Thr12, Thr13, and Ser14. Thr12 is a binding site for sn-glycerol 3-phosphate. Arg16 provides a ligand contact to ADP. Residues Arg82, Glu83, Tyr134, and Asp244 each contribute to the sn-glycerol 3-phosphate site. Glycerol contacts are provided by Arg82, Glu83, Tyr134, Asp244, and Gln245. Residues Thr266 and Gly310 each contribute to the ADP site. ATP-binding residues include Thr266, Gly310, Gln314, and Gly411. Residues Gly411 and Asn415 each coordinate ADP.

Belongs to the FGGY kinase family.

The catalysed reaction is glycerol + ATP = sn-glycerol 3-phosphate + ADP + H(+). It participates in polyol metabolism; glycerol degradation via glycerol kinase pathway; sn-glycerol 3-phosphate from glycerol: step 1/1. Its activity is regulated as follows. Inhibited by fructose 1,6-bisphosphate (FBP). Key enzyme in the regulation of glycerol uptake and metabolism. Catalyzes the phosphorylation of glycerol to yield sn-glycerol 3-phosphate. The polypeptide is Glycerol kinase (Chloroflexus aggregans (strain MD-66 / DSM 9485)).